A 560-amino-acid polypeptide reads, in one-letter code: Beta-hexosaminidase subunit B1 (560 aa).

The N-terminal stretch at 1-25 (MIILKRNIVFLLIIIIVLGIFIATS) is a signal peptide. N-linked (GlcNAc...) asparagine glycosylation is found at N59, N69, N81, N99, N161, N293, and N346. Residue E359 is the Proton donor of the active site. 4 N-linked (GlcNAc...) asparagine glycosylation sites follow: N366, N436, N472, and N547.

Belongs to the glycosyl hydrolase 20 family.

The protein localises to the lysosome. It catalyses the reaction Hydrolysis of terminal non-reducing N-acetyl-D-hexosamine residues in N-acetyl-beta-D-hexosaminides.. Responsible for the degradation of GM2 gangliosides, and a variety of other molecules containing terminal N-acetyl hexosamines. This Dictyostelium discoideum (Social amoeba) protein is Beta-hexosaminidase subunit B1 (hexb1).